A 314-amino-acid polypeptide reads, in one-letter code: Ecto-ADP-ribosyltransferase 4 (314 aa).

Positions 1–46 (MGPLINRCKKILLPTTVPPATMRIWLLGGLLPFLLLLSGLQRPTEG) are cleaved as a signal peptide. Cystine bridges form between cysteine 69-cysteine 280 and cysteine 182-cysteine 231. One can recognise a TR mART core domain in the interval 91–276 (KNYFRMWQKA…LQLRSTGNLS (186 aa)). Asparagine 114 carries N-linked (GlcNAc...) asparagine glycosylation. Residue tyrosine 126 coordinates NAD(+). An N-linked (GlcNAc...) asparagine glycan is attached at asparagine 178. Glutamine 206 contributes to the NAD(+) binding site. Residue asparagine 222 is glycosylated (N-linked (GlcNAc...) asparagine). Serine 240 lines the NAD(+) pocket. Residues asparagine 257 and asparagine 274 are each glycosylated (N-linked (GlcNAc...) asparagine). The GPI-anchor amidated alanine moiety is linked to residue alanine 285. Positions 286-314 (SSKKCIPDPIAIASLSFLTSVIIFSKSRV) are cleaved as a propeptide — removed in mature form.

It belongs to the Arg-specific ADP-ribosyltransferase family. In terms of tissue distribution, expressed in spleen and T-cells.

It is found in the cell membrane. The enzyme catalyses L-arginyl-[protein] + NAD(+) = N(omega)-(ADP-D-ribosyl)-L-arginyl-[protein] + nicotinamide + H(+). In Homo sapiens (Human), this protein is Ecto-ADP-ribosyltransferase 4 (ART4).